A 103-amino-acid chain; its full sequence is Large ribosomal subunit protein bL21 (103 aa).

Belongs to the bacterial ribosomal protein bL21 family. As to quaternary structure, part of the 50S ribosomal subunit. Contacts protein L20.

In terms of biological role, this protein binds to 23S rRNA in the presence of protein L20. The polypeptide is Large ribosomal subunit protein bL21 (Shewanella sediminis (strain HAW-EB3)).